The chain runs to 123 residues: Histone H2B (123 aa).

The disordered stretch occupies residues 1 to 32 (MPPKAASKGAKKAASKAKAARSTDKKKRRRRR). Over residues 9–32 (GAKKAASKAKAARSTDKKKRRRRR) the composition is skewed to basic residues. S110 is a glycosylation site (O-linked (GlcNAc) serine). A Glycyl lysine isopeptide (Lys-Gly) (interchain with G-Cter in ubiquitin) cross-link involves residue K118.

The protein belongs to the histone H2B family. In terms of assembly, the nucleosome is a histone octamer containing two molecules each of H2A, H2B, H3 and H4 assembled in one H3-H4 heterotetramer and two H2A-H2B heterodimers. The octamer wraps approximately 147 bp of DNA. Post-translationally, monoubiquitination of Lys-118 gives a specific tag for epigenetic transcriptional activation and is also prerequisite for histone H3 'Lys-4' and 'Lys-79' methylation.

The protein resides in the nucleus. It is found in the chromosome. Its function is as follows. Core component of nucleosome. Nucleosomes wrap and compact DNA into chromatin, limiting DNA accessibility to the cellular machineries which require DNA as a template. Histones thereby play a central role in transcription regulation, DNA repair, DNA replication and chromosomal stability. DNA accessibility is regulated via a complex set of post-translational modifications of histones, also called histone code, and nucleosome remodeling. In Urechis caupo (Innkeeper worm), this protein is Histone H2B.